The primary structure comprises 299 residues: Delta-9 desaturase-like 1 protein (299 aa).

The next 2 membrane-spanning stretches (helical) occupy residues 31 to 51 (IDIARASAVGAVHLLCLLAPF) and 55 to 75 (WEALRFGVILAIVTSLSITFS). The short motif at 77-82 (HRNLTH) is the Histidine box-1 element. The Histidine box-2 signature appears at 114 to 118 (HRFHH). 2 consecutive transmembrane segments (helical) span residues 174 to 194 (IGLHILTFWTLVYLWGGLPYL) and 198 to 218 (VGVGGTIGYNGTWLINSACHI). Positions 246-250 (HNNHH) match the Histidine box-3 motif. Residues 262-282 (WYQVDLTWYLICFFQALGLAT) traverse the membrane as a helical segment.

Belongs to the fatty acid desaturase type 1 family. Fe cation serves as cofactor.

The protein resides in the endoplasmic reticulum membrane. The protein operates within lipid metabolism; polyunsaturated fatty acid biosynthesis. This chain is Delta-9 desaturase-like 1 protein, found in Arabidopsis thaliana (Mouse-ear cress).